A 506-amino-acid polypeptide reads, in one-letter code: Proline--tRNA ligase (506 aa).

Belongs to the class-II aminoacyl-tRNA synthetase family. ProS type 3 subfamily. In terms of assembly, homodimer.

Its subcellular location is the cytoplasm. The catalysed reaction is tRNA(Pro) + L-proline + ATP = L-prolyl-tRNA(Pro) + AMP + diphosphate. Catalyzes the attachment of proline to tRNA(Pro) in a two-step reaction: proline is first activated by ATP to form Pro-AMP and then transferred to the acceptor end of tRNA(Pro). This is Proline--tRNA ligase from Rhodopirellula baltica (strain DSM 10527 / NCIMB 13988 / SH1).